A 292-amino-acid polypeptide reads, in one-letter code: Bifunctional protein FolD (292 aa).

NADP(+) is bound by residues 171–173 (GAS), Ile196, and Ile237.

This sequence belongs to the tetrahydrofolate dehydrogenase/cyclohydrolase family. In terms of assembly, homodimer.

It catalyses the reaction (6R)-5,10-methylene-5,6,7,8-tetrahydrofolate + NADP(+) = (6R)-5,10-methenyltetrahydrofolate + NADPH. It carries out the reaction (6R)-5,10-methenyltetrahydrofolate + H2O = (6R)-10-formyltetrahydrofolate + H(+). It participates in one-carbon metabolism; tetrahydrofolate interconversion. Catalyzes the oxidation of 5,10-methylenetetrahydrofolate to 5,10-methenyltetrahydrofolate and then the hydrolysis of 5,10-methenyltetrahydrofolate to 10-formyltetrahydrofolate. This is Bifunctional protein FolD from Helicobacter acinonychis (strain Sheeba).